We begin with the raw amino-acid sequence, 725 residues long: Catalase-peroxidase 1 (725 aa).

The tryptophyl-tyrosyl-methioninium (Trp-Tyr) (with M-250) cross-link spans 96–224 (WHSAGSYRLA…LAAVQMGLIY (129 aa)). Histidine 97 functions as the Proton acceptor in the catalytic mechanism. A cross-link (tryptophyl-tyrosyl-methioninium (Tyr-Met) (with W-96)) is located at residues 224–250 (YVNPEGVDGNPDPLRTAKDVRETFKRM). Histidine 265 contributes to the heme b binding site.

Belongs to the peroxidase family. Peroxidase/catalase subfamily. In terms of assembly, homodimer or homotetramer. It depends on heme b as a cofactor. Formation of the three residue Trp-Tyr-Met cross-link is important for the catalase, but not the peroxidase activity of the enzyme.

The enzyme catalyses H2O2 + AH2 = A + 2 H2O. It catalyses the reaction 2 H2O2 = O2 + 2 H2O. In terms of biological role, bifunctional enzyme with both catalase and broad-spectrum peroxidase activity. This Idiomarina loihiensis (strain ATCC BAA-735 / DSM 15497 / L2-TR) protein is Catalase-peroxidase 1.